The primary structure comprises 197 residues: dTTP/UTP pyrophosphatase (197 aa).

Asp-70 serves as the catalytic Proton acceptor.

The protein belongs to the Maf family. YhdE subfamily. A divalent metal cation is required as a cofactor.

It localises to the cytoplasm. It catalyses the reaction dTTP + H2O = dTMP + diphosphate + H(+). The enzyme catalyses UTP + H2O = UMP + diphosphate + H(+). Its function is as follows. Nucleoside triphosphate pyrophosphatase that hydrolyzes dTTP and UTP. May have a dual role in cell division arrest and in preventing the incorporation of modified nucleotides into cellular nucleic acids. The sequence is that of dTTP/UTP pyrophosphatase (yceF2) from Shigella sonnei (strain Ss046).